A 320-amino-acid chain; its full sequence is ATPase H(+)-transporting accessory protein 2 (320 aa).

Positions 1-17 (MLRVFVIFSLFIAAINA) are cleaved as a signal peptide. Residues 18–277 (SGEFTVLNRP…YGSDYPVIFN (260 aa)) are Lumenal-facing. The helical transmembrane segment at 278 to 298 (IILWFMVVFGLSLLAICYAIA) threads the bilayer. At 299–320 (AMDPGRDSIIYRMTSTRIKKDN) the chain is on the cytoplasmic side. Residues 317 to 320 (KKDN) carry the Mediates retrograde transport to the ER motif.

As to quaternary structure, interacts with fz and fz2. Interacts (via N-terminus) with stan. As an accessory component of the multisubunit proton-transporting vacuolar (V)-ATPase protein pump, might interacts with VhaAC45. Post-translationally, proteolytically cleaved by a furin-like convertase in the trans-Golgi network to generate N- and C-terminal fragments. Cleavage is reduced in the fat body.

It localises to the cell membrane. Its subcellular location is the endoplasmic reticulum membrane. The protein localises to the vesicle. The protein resides in the apical cell membrane. It is found in the golgi apparatus membrane. It localises to the secreted. Multifunctional protein which functions as a transmembrane receptor in the planar cell polarity (PCP) and is involved in the assembly of the proton-transporting vacuolar (V)-ATPase protein pump. As transmembrane receptor mediates fz/PCP signaling through interaction with fz and stabilizes asymmetric PCP domains through its interaction with stan. Also mediates Wnt/beta-cat signaling through interaction with fz/fz2. Probably by controlling the assembly of the V-ATPase pump and thus the acidification of the endo-lysosomal system, plays a role in many neuronal processes including synapse morphology and synaptic transmission. Functionally, stabilizes asymmetric Planar Cell Polarity (PCP) domains through its interaction with stan. This chain is ATPase H(+)-transporting accessory protein 2, found in Drosophila melanogaster (Fruit fly).